A 152-amino-acid chain; its full sequence is Phospholipase A2 pkP2 (152 aa).

Positions 1–21 (MNPAHLLVLLAVCVSLLGASA) are cleaved as a signal peptide. Positions 22-27 (IPPLPL) are excised as a propeptide. 7 cysteine pairs are disulfide-bonded: C38/C104, C54/C151, C56/C72, C71/C132, C78/C125, C88/C118, and C111/C123. Y55, G57, and G59 together coordinate Ca(2+). The active site involves H75. Residue D76 coordinates Ca(2+). Residue D126 is part of the active site.

Belongs to the phospholipase A2 family. Group I subfamily. Requires Ca(2+) as cofactor.

The protein localises to the secreted. It catalyses the reaction a 1,2-diacyl-sn-glycero-3-phosphocholine + H2O = a 1-acyl-sn-glycero-3-phosphocholine + a fatty acid + H(+). Its function is as follows. PA2 catalyzes the calcium-dependent hydrolysis of the 2-acyl groups in 3-sn-phosphoglycerides. In Laticauda semifasciata (Black-banded sea krait), this protein is Phospholipase A2 pkP2.